Consider the following 358-residue polypeptide: MARRQDEARAGVPLRVEGPPDKEVHLILYHWTHSFSSQKVRLVIAEKALKCEEHDVSLPLSEHNEPWFMRLNSAGEVPVLVHGENIICEATQIIDYLEQTFLDERTPRLMPDEGSMYYPRVQHYRELLDSLPMDAYTHGCILHPELTVDSMIPAYATTRIRSQIGNTESELKKLAEENPDLQEAYIAKQKRLKSKLLDHDNVKYLKKILDELEKVLDQVETELQRRNEETPEEGNQPWLCGESFTLADVSLAVTLHRLKFLGFARRNWGHGKRPNLETYYERVLKRKTFNKVLGHVNNILISAVLPTAFRVAKKRAPKVLGSTLVVGLLVGMGYFAFMLFRRRLGSMILALRPRPNYF.

The region spanning 24 to 105 (VHLILYHWTH…YLEQTFLDER (82 aa)) is the GST N-terminal domain. Residues K50, K172, K173, K188, and K190 each participate in a glycyl lysine isopeptide (Lys-Gly) (interchain with G-Cter in ubiquitin) cross-link. One can recognise a GST C-terminal domain in the interval 153-309 (PAYATTRIRS…LISAVLPTAF (157 aa)). An N6-acetyllysine; alternate modification is found at K203. K203 participates in a covalent cross-link: Glycyl lysine isopeptide (Lys-Gly) (interchain with G-Cter in ubiquitin); alternate. Residues K206, K207, and K214 each participate in a glycyl lysine isopeptide (Lys-Gly) (interchain with G-Cter in ubiquitin) cross-link. 2 consecutive transmembrane segments (helical) span residues 292 to 312 (VLGH…FRVA) and 320 to 340 (LGST…FMLF). A required for mitochondrial localization region spans residues 320–358 (LGSTLVVGLLVGMGYFAFMLFRRRLGSMILALRPRPNYF).

It belongs to the GST superfamily. As to quaternary structure, homodimer. In terms of processing, ubiquitinated by PRKN during mitophagy, leading to its degradation and enhancement of mitophagy. Deubiquitinated by USP30. Expressed in brain, spinal cord, muscles and intestinal villi. In the central nervous system expressed most prominently in the cortex, cerebellum, thalamus, olfactory bulb, and spinal cord. Expressed also in sciatic nerves and in dorsal root ganglia.

Its subcellular location is the mitochondrion outer membrane. It is found in the cytoplasm. In terms of biological role, regulates the mitochondrial network by promoting mitochondrial fission. The sequence is that of Ganglioside-induced differentiation-associated protein 1 (Gdap1) from Mus musculus (Mouse).